The sequence spans 367 residues: Cystinosin (367 aa).

Positions 1 to 22 (MIRRWLVIFILFPLQLIEKCES) are cleaved as a signal peptide. Residues 23-125 (TVDFSVPPIV…LVIHSNIVSI (103 aa)) are Lumenal-facing. Residues asparagine 51, asparagine 66, asparagine 84, asparagine 104, and asparagine 107 are each glycosylated (N-linked (GlcNAc...) asparagine). The PQ-loop 1 domain occupies 123 to 189 (VSIINQVIGW…LFWVPSIKEQ (67 aa)). Residues 126-150 (INQVIGWIYFVAWSVSFYPQVITNW) form a helical membrane-spanning segment. Residues 151–159 (RRKSVVGLS) are Cytoplasmic-facing. A helical transmembrane segment spans residues 160–179 (FDFVVLNLMGFVAYSVFNIG). Asparagine 166 serves as a coordination point for L-cystine. Residues 180–202 (LFWVPSIKEQFLLKYPNGVNPVD) are Lumenal-facing. The helical transmembrane segment at 203-225 (SNDVFFSLHAVALTLVVIVQCLL) threads the bilayer. Aspartate 205 is a binding site for H(+). The Cytoplasmic segment spans residues 226–234 (YERGSQRVS). The chain crosses the membrane as a helical span at residues 235–257 (WLAISFLVLSWLFTLIALIMAAV). The Lumenal segment spans residues 258–263 (GATTWL). In terms of domain architecture, PQ-loop 2 spans 263–328 (LQFLFCFSYI…QSYNNDQWTL (66 aa)). A helical transmembrane segment spans residues 264-289 (QFLFCFSYIKLAVTLVKYFPQAYMNF). 3 residues coordinate L-cystine: lysine 273, lysine 280, and tyrosine 281. The Cytoplasmic portion of the chain corresponds to 290–298 (HYKSTEGWS). The helical transmembrane segment at 299-308 (IGNVLLDFTG) threads the bilayer. Asparagine 301 and aspartate 305 together coordinate L-cystine. Residue aspartate 305 coordinates H(+). Topologically, residues 309 to 331 (GSFSLLQMFLQSYNNDQWTLIFG) are lumenal. A helical transmembrane segment spans residues 332 to 354 (DPTKFGLGIFSIIFDVVFFIQHF). Aspartate 346 contributes to the H(+) binding site. Residues 355 to 367 (CLYRKKPGYDQLN) are Cytoplasmic-facing. The Lysosomal targeting motif motif lies at 362–366 (GYDQL).

Belongs to the cystinosin family. In terms of assembly, interacts with components of the V-ATPase complex. Interacts with components of the Ragulator complex. Interacts with RRAGA/RagA and RRAGC/RagC. Interacts with AP-3 complex subunit mu (AP3M1 or AP3M2).

The protein localises to the lysosome membrane. It localises to the melanosome membrane. The enzyme catalyses L-cystine(out) + H(+)(out) = L-cystine(in) + H(+)(in). With respect to regulation, switches between a lumen- and a cytosol-open conformation: pH induces conformational changes and shifts the equilibrium to facilitate the transition between the lumen- and cytosol-open conformation, thereby promoting cystine transport. Protonation of specific aspartate residues (Asp-205, Asp-305 and Asp-346) favors the cytosol-open conformation. Its function is as follows. Cystine/H(+) symporter that mediates export of cystine, the oxidized dimer of cysteine, from lysosomes. Plays an important role in melanin synthesis by catalyzing cystine export from melanosomes, possibly by inhibiting pheomelanin synthesis. In addition to cystine export, also acts as a positive regulator of mTORC1 signaling in kidney proximal tubular cells, via interactions with components of the v-ATPase and Ragulator complexes. Also involved in small GTPase-regulated vesicle trafficking and lysosomal localization of LAMP2A, independently of cystine transporter activity. This chain is Cystinosin, found in Bos taurus (Bovine).